The primary structure comprises 263 residues: MIILIHTSKAMRPAPQGGATLTVPALRDRAEELATYLKTLSVEQFAAAMELSPELADRTHGLFADWGTEPERQSPAIDSFAGDIYSGLRACDLTPADRAYAEGRLRILSGLYGILRPEDGIQPYRLEMGYRLPDPPYANLYQFWGDAVARCLPRTGVIVDLAAVEYNRIVTRFLSRDRFVSPRFLTINPKTGEPRFVVVHAKIARGAFARWLLAARVEDPADIVDFAEIGYRYEPALSKPRQPAFVCQEFGGKGLSVRRHDLG.

It belongs to the UPF0246 family.

The sequence is that of UPF0246 protein Strop_2927 from Salinispora tropica (strain ATCC BAA-916 / DSM 44818 / JCM 13857 / NBRC 105044 / CNB-440).